Reading from the N-terminus, the 172-residue chain is uncharacterized protein (172 aa).

A run of 4 helical transmembrane segments spans residues 46 to 66 (MFSI…FLYP), 76 to 96 (LLSL…VGLF), 104 to 124 (WKFL…LGWS), and 129 to 149 (FFYA…FTEI).

It is found in the endoplasmic reticulum membrane. This is an uncharacterized protein from Schizosaccharomyces pombe (strain 972 / ATCC 24843) (Fission yeast).